The chain runs to 189 residues: MTGKLIWLVGPSGSGKDSLLEALRKQEHPQMLVAHRYITRPAGAGCENHVALSEHEFFTRAAQHLFALSWHANNLYYGVGMEIDLWLHAGLDVVVNGSRAHLPQAKARYGESLLPVCLQVSPDILRQRLEQRGRENALEIAQRLERAARYTPQQCVMLNNDGSLLQSVEMFLHLIRTHGNHKESQHACL.

Residue 10 to 17 participates in ATP binding; the sequence is GPSGSGKD.

Belongs to the ribose 1,5-bisphosphokinase family.

The enzyme catalyses alpha-D-ribose 1,5-bisphosphate + ATP = 5-phospho-alpha-D-ribose 1-diphosphate + ADP. It participates in metabolic intermediate biosynthesis; 5-phospho-alpha-D-ribose 1-diphosphate biosynthesis; 5-phospho-alpha-D-ribose 1-diphosphate from D-ribose 5-phosphate (route II): step 3/3. Functionally, catalyzes the phosphorylation of ribose 1,5-bisphosphate to 5-phospho-D-ribosyl alpha-1-diphosphate (PRPP). The sequence is that of Ribose 1,5-bisphosphate phosphokinase PhnN from Enterobacter lignolyticus (strain SCF1).